The following is a 173-amino-acid chain: NADH-quinone oxidoreductase subunit B 1 (173 aa).

Positions 42, 43, 107, and 137 each coordinate [4Fe-4S] cluster.

It belongs to the complex I 20 kDa subunit family. NDH-1 is composed of 14 different subunits. Subunits NuoB, C, D, E, F, and G constitute the peripheral sector of the complex. The cofactor is [4Fe-4S] cluster.

The protein localises to the cell inner membrane. The enzyme catalyses a quinone + NADH + 5 H(+)(in) = a quinol + NAD(+) + 4 H(+)(out). NDH-1 shuttles electrons from NADH, via FMN and iron-sulfur (Fe-S) centers, to quinones in the respiratory chain. The immediate electron acceptor for the enzyme in this species is believed to be ubiquinone. Couples the redox reaction to proton translocation (for every two electrons transferred, four hydrogen ions are translocated across the cytoplasmic membrane), and thus conserves the redox energy in a proton gradient. This Anaeromyxobacter sp. (strain K) protein is NADH-quinone oxidoreductase subunit B 1.